The primary structure comprises 2259 residues: Putative Polycomb group protein ASXL3 (2259 aa).

Residues 10-83 (RTWAEAARLA…KSGLYALRKE (74 aa)) form the HTH HARE-type domain. The interval 181 to 230 (VVLTPLKVSDEQSDSPSGSESKNGEADSSDKEMKHGQKSPTGKQTSQHLK) is disordered. Residues 202–215 (KNGEADSSDKEMKH) are compositionally biased toward basic and acidic residues. The segment covering 218 to 227 (KSPTGKQTSQ) has biased composition (polar residues). Residues 253-362 (PGSILVNTNL…FERFYGERSG (110 aa)) enclose the DEUBAD domain. Disordered regions lie at residues 364 to 399 (SREE…AQNA), 607 to 643 (CISE…CTPA), 703 to 810 (EASP…IPEP), 857 to 1012 (SEMT…PLKI), 1025 to 1049 (SQPV…NTGA), 1126 to 1150 (RLPS…TKME), 1433 to 1462 (LSGE…GGFV), 1614 to 1643 (DPMR…GLKA), 1687 to 1719 (DFPG…TTSP), and 1993 to 2075 (NMLS…TTKR). Composition is skewed to polar residues over residues 607 to 617 (CISETSFSSES), 630 to 643 (GETQ…CTPA), and 703 to 717 (EASP…SEAS). Low complexity predominate over residues 722-741 (LPPTSETSSESSMPLTSETP). 2 stretches are compositionally biased toward polar residues: residues 770–781 (KSPSGSEEANSP) and 926–945 (QSST…SEPS). Basic and acidic residues-rich tracts occupy residues 949-985 (DGIR…DDQS) and 995-1006 (PEKEQPPREEPR). Over residues 1034–1043 (RASTSTSVSS) the composition is skewed to low complexity. Polar residues predominate over residues 1437 to 1448 (NLDNNSGPLNRT). Polar residues predominate over residues 1699 to 1719 (EVTSSASVQPTQTMKPSTTSP). Positions 2023-2055 (PLPPPPPPPPPPPPPLALPPPPPPPPPLPPPLP) are enriched in pro residues. The segment at 2221–2258 (ELKCSCRLKAMIVCKGCGAFCHDDCIGPSKLCVACLVV) adopts a PHD-type; atypical zinc-finger fold.

The protein belongs to the Asx family. In terms of assembly, core component of the polycomb repressive deubiquitinase (PR-DUB) complex, at least composed of BAP1, one of ASXL1, ASXL2 or (probably) ASXL3, and one of MBD5 or MBD6. Distinct combinations of ASXL and MBD proteins may preferentially bind specific histone modification marks. The PR-DUB core associates with a number of accessory proteins, including FOXK1, FOXK2, KDM1B, HCFC1 and OGT; KDM1B specifically associates with ASXL2 PR-DUB complexes. Interacts (via PHD domain) with MBD5 and MBD6 (via MBD domain); the interaction is probably direct and mediates association of MBD proteins with the PR-DUB core.

It localises to the nucleus. Its function is as follows. Putative Polycomb group (PcG) protein. PcG proteins act by forming multiprotein complexes, which are required to maintain the transcriptionally repressive state of homeotic genes throughout development. PcG proteins are not required to initiate repression, but to maintain it during later stages of development. They probably act via methylation of histones, rendering chromatin heritably changed in its expressibility. Non-catalytic component of the PR-DUB complex, a complex that specifically mediates deubiquitination of histone H2A monoubiquitinated at 'Lys-119' (H2AK119ub1). The PR-DUB complex is an epigenetic regulator of gene expression and acts as a transcriptional coactivator, affecting genes involved in development, cell communication, signaling, cell proliferation and cell viability. ASXL1, ASXL2 and ASXL3 function redundantly in the PR-DUB complex and are essential for chromatin recruitment and transcriptional activation of associated genes. This chain is Putative Polycomb group protein ASXL3 (Asxl3), found in Mus musculus (Mouse).